Consider the following 189-residue polypeptide: Interferon alpha-A (189 aa).

The signal sequence occupies residues 1 to 23; the sequence is MAPAWSFLLSLLLLSCNAICSLG. 2 disulfides stabilise this stretch: Cys24–Cys122 and Cys52–Cys162.

It belongs to the alpha/beta interferon family.

The protein localises to the secreted. Produced by macrophages, IFN-alpha have antiviral activities. Interferon stimulates the production of two enzymes: a protein kinase and an oligoadenylate synthetase. This chain is Interferon alpha-A (IFNAA), found in Bos taurus (Bovine).